The primary structure comprises 1007 residues: Lysosomal alpha-mannosidase (1007 aa).

Low complexity-rich tracts occupy residues M1–V10 and A19–A28. The segment at M1–P30 is disordered. Residues M1–A50 form the signal peptide. 2 disulfide bridges follow: C56/C360 and C269/C274. Residues H73 and D75 each coordinate Zn(2+). N134 carries N-linked (GlcNAc...) asparagine glycosylation. D197 contributes to the Zn(2+) binding site. The Nucleophile role is filled by D197. Residues N311, N347, and N369 are each glycosylated (N-linked (GlcNAc...) asparagine). Disulfide bonds link C414/C474 and C495/C503. Residue H448 participates in Zn(2+) binding. Residues N499, N543, N643, N649, N690, N764, and N927 are each glycosylated (N-linked (GlcNAc...) asparagine).

The protein belongs to the glycosyl hydrolase 38 family. It depends on Zn(2+) as a cofactor. In terms of processing, processed into 3 peptides of 72 kDa, 41 kDa and 12 kDa.

It is found in the lysosome. It catalyses the reaction Hydrolysis of terminal, non-reducing alpha-D-mannose residues in alpha-D-mannosides.. Functionally, necessary for the catabolism of N-linked carbohydrates released during glycoprotein turnover. The sequence is that of Lysosomal alpha-mannosidase (MAN2B1) from Felis catus (Cat).